A 101-amino-acid chain; its full sequence is MNLKPLNDRVLVKRLESEEKTAGGLYIPDTAKEKPSRGEVVAVGPGKHTDDGKLIPMAVKAGDTVLFNKYAGTEVKLDGVEHLVMREDDILAVITGETGRK.

The protein belongs to the GroES chaperonin family. In terms of assembly, heptamer of 7 subunits arranged in a ring. Interacts with the chaperonin GroEL.

Its subcellular location is the cytoplasm. Together with the chaperonin GroEL, plays an essential role in assisting protein folding. The GroEL-GroES system forms a nano-cage that allows encapsulation of the non-native substrate proteins and provides a physical environment optimized to promote and accelerate protein folding. GroES binds to the apical surface of the GroEL ring, thereby capping the opening of the GroEL channel. This Lawsonia intracellularis protein is Co-chaperonin GroES.